The sequence spans 467 residues: Glutamine synthetase (467 aa).

A GS beta-grasp domain is found at 14–98 (EEVEYVDIRF…VHCNVVEPDT (85 aa)). The GS catalytic domain occupies 106-467 (PRGAAVKAEA…PVEYQMYYSC (362 aa)). Mg(2+) contacts are provided by Glu-131 and Glu-133. Asp-209 is a binding site for ATP. Positions 214 and 221 each coordinate Mg(2+). L-glutamate-binding positions include 265 to 266 (NG) and Gly-266. Mg(2+) is bound at residue His-270. Residues 272–274 (NMS) and Ser-274 contribute to the ATP site. 3 residues coordinate L-glutamate: Arg-320, Glu-326, and Arg-338. The ATP site is built by Arg-338 and Arg-343. Glu-356 is a binding site for Mg(2+). Arg-358 contributes to the L-glutamate binding site. An O-AMP-tyrosine modification is found at Tyr-396.

The protein belongs to the glutamine synthetase family. As to quaternary structure, oligomer of 12 subunits arranged in the form of two hexameric ring. Mg(2+) serves as cofactor.

The protein resides in the cytoplasm. The enzyme catalyses L-glutamate + NH4(+) + ATP = L-glutamine + ADP + phosphate + H(+). With respect to regulation, the activity of this enzyme could be controlled by adenylation under conditions of abundant glutamine. Its function is as follows. Catalyzes the ATP-dependent biosynthesis of glutamine from glutamate and ammonia. The sequence is that of Glutamine synthetase from Cereibacter sphaeroides (Rhodobacter sphaeroides).